We begin with the raw amino-acid sequence, 153 residues long: Large ribosomal subunit protein uL22 (153 aa).

The protein belongs to the universal ribosomal protein uL22 family. In terms of assembly, part of the 50S ribosomal subunit.

Functionally, this protein binds specifically to 23S rRNA. It makes multiple contacts with different domains of the 23S rRNA in the assembled 50S subunit and ribosome. Its function is as follows. The globular domain of the protein is located near the polypeptide exit tunnel on the outside of the subunit, while an extended beta-hairpin is found that lines the wall of the exit tunnel in the center of the 70S ribosome. This is Large ribosomal subunit protein uL22 from Methanococcus maripaludis (strain C5 / ATCC BAA-1333).